A 310-amino-acid polypeptide reads, in one-letter code: Alpha/beta hydrolase domain-containing protein 17C (310 aa).

Catalysis depends on charge relay system residues S192, D257, and H286.

Belongs to the AB hydrolase superfamily. ABHD17 family. Post-translationally, palmitoylated on cysteine residues located in a cysteine cluster at the N-terminus which promotes membrane localization.

The protein localises to the recycling endosome membrane. The protein resides in the cell projection. Its subcellular location is the dendritic spine. It localises to the postsynaptic density membrane. The catalysed reaction is S-hexadecanoyl-L-cysteinyl-[protein] + H2O = L-cysteinyl-[protein] + hexadecanoate + H(+). In terms of biological role, hydrolyzes fatty acids from S-acylated cysteine residues in proteins. This is Alpha/beta hydrolase domain-containing protein 17C from Xenopus tropicalis (Western clawed frog).